The primary structure comprises 398 residues: MTQSVCILGVTGSIGRSTLKILGQHPDKYSVFAVSAHSRISELVEICKQFRPKVVVVPEQKIVELKTLFAQQNISDIDVLAGQEGLVDIASHTDVDIVMAAIVGAAGLLPTLAAVKAGKRVLLANKEALVMSGEIMMQAARDHQALLLPVDSEHNAIFQSLPHNYLQADRTGQPQLGVSKILLTASGGPFLNHSLEQLTHVTPQQACKHPNWSMGQKISVDSATLMNKGLELIEACHLFSISEHFVTVVVHPQSIIHSMVQYVDGSTLAQMGNPDMCTPIAHALAWPERLQTNVPALDLFEYSQLNFQAPDTQKFPALNLARQAMRAGGLAPTILNAANEIAVEAFLMERIGFTSIPQVVEHTLEKLENAAAESIECILDKDKVARSVAQQYISSIGG.

NADPH contacts are provided by T11, G12, S13, I14, and N125. K126 contacts 1-deoxy-D-xylulose 5-phosphate. E127 contacts NADPH. Mn(2+) is bound at residue D151. S152, E153, S186, and H209 together coordinate 1-deoxy-D-xylulose 5-phosphate. E153 contacts Mn(2+). Residue G215 coordinates NADPH. Positions 222, 227, 228, and 231 each coordinate 1-deoxy-D-xylulose 5-phosphate. E231 lines the Mn(2+) pocket.

It belongs to the DXR family. Mg(2+) is required as a cofactor. It depends on Mn(2+) as a cofactor.

It carries out the reaction 2-C-methyl-D-erythritol 4-phosphate + NADP(+) = 1-deoxy-D-xylulose 5-phosphate + NADPH + H(+). It functions in the pathway isoprenoid biosynthesis; isopentenyl diphosphate biosynthesis via DXP pathway; isopentenyl diphosphate from 1-deoxy-D-xylulose 5-phosphate: step 1/6. Catalyzes the NADPH-dependent rearrangement and reduction of 1-deoxy-D-xylulose-5-phosphate (DXP) to 2-C-methyl-D-erythritol 4-phosphate (MEP). The sequence is that of 1-deoxy-D-xylulose 5-phosphate reductoisomerase from Acinetobacter baumannii (strain ACICU).